The sequence spans 125 residues: Holo-[acyl-carrier-protein] synthase (125 aa).

The Mg(2+) site is built by aspartate 8 and glutamate 57.

This sequence belongs to the P-Pant transferase superfamily. AcpS family. Mg(2+) is required as a cofactor.

It localises to the cytoplasm. It carries out the reaction apo-[ACP] + CoA = holo-[ACP] + adenosine 3',5'-bisphosphate + H(+). Functionally, transfers the 4'-phosphopantetheine moiety from coenzyme A to a Ser of acyl-carrier-protein. In Azoarcus sp. (strain BH72), this protein is Holo-[acyl-carrier-protein] synthase.